We begin with the raw amino-acid sequence, 628 residues long: DNA ligase (628 aa).

NAD(+) is bound by residues 36–40 (DVEYD), 85–86 (SL), and E117. Residue K119 is the N6-AMP-lysine intermediate of the active site. Residues R140, E174, K309, and K333 each coordinate NAD(+). C427, C430, C446, and C452 together coordinate Zn(2+).

This sequence belongs to the NAD-dependent DNA ligase family. LigA subfamily. The cofactor is Mg(2+). It depends on Mn(2+) as a cofactor.

It carries out the reaction NAD(+) + (deoxyribonucleotide)n-3'-hydroxyl + 5'-phospho-(deoxyribonucleotide)m = (deoxyribonucleotide)n+m + AMP + beta-nicotinamide D-nucleotide.. Its function is as follows. DNA ligase that catalyzes the formation of phosphodiester linkages between 5'-phosphoryl and 3'-hydroxyl groups in double-stranded DNA using NAD as a coenzyme and as the energy source for the reaction. It is essential for DNA replication and repair of damaged DNA. The protein is DNA ligase of Tropheryma whipplei (strain TW08/27) (Whipple's bacillus).